We begin with the raw amino-acid sequence, 523 residues long: GMP synthase [glutamine-hydrolyzing] (523 aa).

The Glutamine amidotransferase type-1 domain occupies 9–198; the sequence is PVLVVDFGAQ…LTEIAGLEQN (190 aa). Catalysis depends on Cys86, which acts as the Nucleophile. Catalysis depends on residues His172 and Glu174. A GMPS ATP-PPase domain is found at 199 to 397; it reads WTAANIAEEL…LGLPEEIVGR (199 aa). 227-233 lines the ATP pocket; sequence SGGVDSA.

As to quaternary structure, homodimer.

It catalyses the reaction XMP + L-glutamine + ATP + H2O = GMP + L-glutamate + AMP + diphosphate + 2 H(+). It participates in purine metabolism; GMP biosynthesis; GMP from XMP (L-Gln route): step 1/1. Catalyzes the synthesis of GMP from XMP. This is GMP synthase [glutamine-hydrolyzing] from Corynebacterium glutamicum (strain ATCC 13032 / DSM 20300 / JCM 1318 / BCRC 11384 / CCUG 27702 / LMG 3730 / NBRC 12168 / NCIMB 10025 / NRRL B-2784 / 534).